A 103-amino-acid chain; its full sequence is Pyrimidine/purine nucleoside phosphorylase (103 aa).

The protein belongs to the nucleoside phosphorylase PpnP family.

It carries out the reaction a purine D-ribonucleoside + phosphate = a purine nucleobase + alpha-D-ribose 1-phosphate. The catalysed reaction is adenosine + phosphate = alpha-D-ribose 1-phosphate + adenine. The enzyme catalyses cytidine + phosphate = cytosine + alpha-D-ribose 1-phosphate. It catalyses the reaction guanosine + phosphate = alpha-D-ribose 1-phosphate + guanine. It carries out the reaction inosine + phosphate = alpha-D-ribose 1-phosphate + hypoxanthine. The catalysed reaction is thymidine + phosphate = 2-deoxy-alpha-D-ribose 1-phosphate + thymine. The enzyme catalyses uridine + phosphate = alpha-D-ribose 1-phosphate + uracil. It catalyses the reaction xanthosine + phosphate = alpha-D-ribose 1-phosphate + xanthine. Functionally, catalyzes the phosphorolysis of diverse nucleosides, yielding D-ribose 1-phosphate and the respective free bases. Can use uridine, adenosine, guanosine, cytidine, thymidine, inosine and xanthosine as substrates. Also catalyzes the reverse reactions. The polypeptide is Pyrimidine/purine nucleoside phosphorylase (Shewanella baltica (strain OS155 / ATCC BAA-1091)).